Consider the following 481-residue polypeptide: Inosine-5'-monophosphate dehydrogenase (481 aa).

CBS domains lie at 92–148 and 152–209; these read VIND…SKKV and MTKM…PEAN. NAD(+) is bound by residues Asp-244 and 293-295; that span reads GIG. Gly-295 and Gly-297 together coordinate K(+). An IMP-binding site is contributed by Ser-298. Cys-300 contributes to the K(+) binding site. Residue Cys-300 is the Thioimidate intermediate of the active site. Residues 333–335, 356–357, and 380–384 contribute to the IMP site; these read DGG, GS, and YRGMG. Catalysis depends on Arg-396, which acts as the Proton acceptor. Glu-410 serves as a coordination point for IMP. K(+)-binding residues include Glu-464, Ser-465, and His-466.

The protein belongs to the IMPDH/GMPR family. In terms of assembly, homotetramer. Requires K(+) as cofactor.

It catalyses the reaction IMP + NAD(+) + H2O = XMP + NADH + H(+). Its pathway is purine metabolism; XMP biosynthesis via de novo pathway; XMP from IMP: step 1/1. Its activity is regulated as follows. Mycophenolic acid (MPA) is a non-competitive inhibitor that prevents formation of the closed enzyme conformation by binding to the same site as the amobile flap. In contrast, mizoribine monophosphate (MZP) is a competitive inhibitor that induces the closed conformation. MPA is a potent inhibitor of mammalian IMPDHs but a poor inhibitor of the bacterial enzymes. MZP is a more potent inhibitor of bacterial IMPDH. Functionally, catalyzes the conversion of inosine 5'-phosphate (IMP) to xanthosine 5'-phosphate (XMP), the first committed and rate-limiting step in the de novo synthesis of guanine nucleotides, and therefore plays an important role in the regulation of cell growth. This Helicobacter pylori (strain J99 / ATCC 700824) (Campylobacter pylori J99) protein is Inosine-5'-monophosphate dehydrogenase.